A 491-amino-acid chain; its full sequence is MATKKRALSFSEKHQKLVDEKFRKSLNIQVMNKLERQAKNQVVQNENDEKVERQRFLRVLQNEQFELDMEEAIQKAEANKMLRDRQLEQEERLANELARLKHESLKDKKMRQQVRENSIELRELEQKLKAAYMNKERAAQIVEKDAMKYEQMKRDAEIERIMMEEHDRLLKEESAKQERRNKERAQYYLDLEKQLEDQERRKQEAYEQLLKEKLMIDEIVRKIYEEDQVERQQKLEKKNAIQKYIEEFQRAQDFWRQKKREEMEEENRKIIEFANIQEQREGERMARVHEIEEKRVQRQNLLMKQLEETLRQRDDLEQVRQELYQEEQAEIIKLKVKEEAELRLRRQREMKQDFEDQMALKELILQAAKEEEETFKKAMLAKFAEDDRIELMNAQKQRMKQLEHKRAVEKLIEERRSQFLADKQRELEELQLQQRRQGCINEIIEEERLRLLKEHAAKLLGYLPKGVFKREDDVDMLGEEFRKAYQKRDGV.

Positions 1 to 314 (MATKKRALSF…QLEETLRQRD (314 aa)) are interaction with BBOF1. 2 coiled-coil regions span residues 29-253 (QVMN…RAQD) and 287-410 (RVHE…AVEK). Tyr-188 carries the phosphotyrosine modification.

This sequence belongs to the MNS1 family. Able to form oligomers. Microtubule inner protein component of sperm flagellar doublet microtubules. Interacts with ODAD1. Interacts with BBOF1. High expression in testis. Expressed in pachytene spermatocytes and post-meiotic spermatids.

The protein localises to the nucleus. It is found in the cytoplasm. It localises to the cytoskeleton. Its subcellular location is the flagellum axoneme. The protein resides in the cilium axoneme. Microtubule inner protein (MIP) part of the dynein-decorated doublet microtubules (DMTs) in cilia axoneme, which is required for motile cilia beating. May play a role in the control of meiotic division and germ cell differentiation through regulation of pairing and recombination during meiosis. Required for sperm flagella assembly. May play a role in the assembly and function of the outer dynein arm-docking complex (ODA-DC). ODA-DC mediates outer dynein arms (ODA) binding onto the axonemal doublet microtubules. The polypeptide is Meiosis-specific nuclear structural protein 1 (Mns1) (Mus musculus (Mouse)).